A 707-amino-acid chain; its full sequence is MGMSKSLSCFGYPLSIFFIVVNEFCERFSYYGMRALLILYFRNFIGWDDNLSTVIYHTFVALCYLTPILGALIADAWLGKFKTIVWLSIVYTIGQAVTSLSSVNELTDNNHDGTPDSLPVHVAVCMIGLLLIALGTGGIKPCVSAFGGDQFEEGQEKQRNRFFSIFYLAINAGSLLSTIITPMVRVQQCGIHVKQACYPLAFGIPAILMAVSLIVFIIGSGMYKKFKPQGNILSKVVKCICFAIKNRFRHRSKQFPKRAHWLDWAKEKYDERLIAQIKMVTRVLFLYIPLPMFWALFDQQGSRWTLQATTMSGRIGILEIQPDQMQTVNTILIIILVPIMDAVVYPLIAKCGLNFTSLKKMTIGMFLASMAFVAAAILQVEIDKTLPVFPKANEVQIKVLNVGSENMIISLPGQTVTLNQMSQTNEFMTFNEDTLTSINITSGSQVTMITPSLEAGQRHTLLVWAPNNYRVVNDGLTQKSDKGENGIRFVNTYSQPINVTMSGKVYEHIASYNASEYQFFTSGVKGFTVSSAGISEQCRRDFESPYLEFGSAYTYLITSQATGCPQVTEFEDIPPNTMNMAWQIPQYFLITSGEVVFSITGLEFSYSQAPSNMKSVLQAGWLLTVAVGNIIVLIVAGAGQINKQWAEYILFAALLLVVCVIFAIMARFYTYVNPAEIEAQFEEDEKKKNPEKNDLYPSLAPVSQTQM.

The helical transmembrane segment at 1 to 21 (MGMSKSLSCFGYPLSIFFIVV) threads the bilayer. Over 22–53 (NEFCERFSYYGMRALLILYFRNFIGWDDNLST) the chain is Extracellular. A glycan (N-linked (GlcNAc...) asparagine) is linked at Asn50. The helical transmembrane segment at 54–74 (VIYHTFVALCYLTPILGALIA) threads the bilayer. At 75–82 (DAWLGKFK) the chain is on the cytoplasmic side. A helical membrane pass occupies residues 83–103 (TIVWLSIVYTIGQAVTSLSSV). Over 104-118 (NELTDNNHDGTPDSL) the chain is Extracellular. Residues 119 to 139 (PVHVAVCMIGLLLIALGTGGI) form a helical membrane-spanning segment. The Cytoplasmic segment spans residues 140 to 161 (KPCVSAFGGDQFEEGQEKQRNR). The helical transmembrane segment at 162–182 (FFSIFYLAINAGSLLSTIITP) threads the bilayer. Residues 183–198 (MVRVQQCGIHVKQACY) lie on the Extracellular side of the membrane. The helical transmembrane segment at 199–219 (PLAFGIPAILMAVSLIVFIIG) threads the bilayer. Over 220–276 (SGMYKKFKPQGNILSKVVKCICFAIKNRFRHRSKQFPKRAHWLDWAKEKYDERLIAQ) the chain is Cytoplasmic. The chain crosses the membrane as a helical span at residues 277-297 (IKMVTRVLFLYIPLPMFWALF). The Extracellular segment spans residues 298–327 (DQQGSRWTLQATTMSGRIGILEIQPDQMQT). The chain crosses the membrane as a helical span at residues 328–348 (VNTILIIILVPIMDAVVYPLI). The Cytoplasmic portion of the chain corresponds to 349-361 (AKCGLNFTSLKKM). The chain crosses the membrane as a helical span at residues 362-382 (TIGMFLASMAFVAAAILQVEI). Over 383–583 (DKTLPVFPKA…PPNTMNMAWQ (201 aa)) the chain is Extracellular. The extracellular domain (ECD) stretch occupies residues 383-583 (DKTLPVFPKA…PPNTMNMAWQ (201 aa)). N-linked (GlcNAc...) asparagine glycosylation is found at Asn439, Asn498, and Asn513. Residues 584–604 (IPQYFLITSGEVVFSITGLEF) form a helical membrane-spanning segment. Over 605–618 (SYSQAPSNMKSVLQ) the chain is Cytoplasmic. Residues 619–639 (AGWLLTVAVGNIIVLIVAGAG) traverse the membrane as a helical segment. The Extracellular segment spans residues 640–644 (QINKQ). The helical transmembrane segment at 645-665 (WAEYILFAALLLVVCVIFAIM) threads the bilayer. The Cytoplasmic segment spans residues 666 to 707 (ARFYTYVNPAEIEAQFEEDEKKKNPEKNDLYPSLAPVSQTQM). The segment at 682 to 707 (EEDEKKKNPEKNDLYPSLAPVSQTQM) is disordered. The segment covering 684–694 (DEKKKNPEKND) has biased composition (basic and acidic residues).

The protein belongs to the major facilitator superfamily. Proton-dependent oligopeptide transporter (POT/PTR) (TC 2.A.17) family. As to quaternary structure, interacts (via extracellular domain region) with trypsin. Intestine, kidney, liver and low in brain.

It is found in the apical cell membrane. The catalysed reaction is a dipeptide(out) + H(+)(out) = a dipeptide(in) + H(+)(in). It carries out the reaction an L-amino acid tripeptide(out) + H(+)(out) = an L-amino acid tripeptide(in) + H(+)(in). It catalyses the reaction L-alanyl-L-lysine(out) + H(+)(out) = L-alanyl-L-lysine(in) + H(+)(in). The enzyme catalyses L-alanyl-L-proline(out) + H(+)(out) = L-alanyl-L-proline(in) + H(+)(in). The catalysed reaction is L-alanyl-L-valine(out) + H(+)(out) = L-alanyl-L-valine(in) + H(+)(in). It carries out the reaction carnosine(out) + H(+)(out) = carnosine(in) + H(+)(in). It catalyses the reaction glycyl-L-glutamine(out) + H(+)(out) = glycyl-L-glutamine(in) + H(+)(in). The enzyme catalyses glycyl-L-leucine(out) + H(+)(out) = glycyl-L-leucine(in) + H(+)(in). The catalysed reaction is glycyl-L-proline(out) + H(+)(out) = glycyl-L-proline(in) + H(+)(in). It carries out the reaction glycyl-sarcosine(out) + H(+)(out) = glycyl-sarcosine(in) + H(+)(in). It catalyses the reaction L-leucyl-L-leucine(out) + H(+)(out) = L-leucyl-L-leucine(in) + H(+)(in). The enzyme catalyses L-leucyl-L-proline(out) + H(+)(out) = L-leucyl-L-proline(in) + H(+)(in). The catalysed reaction is L-phenylalanyl-L-leucine(out) + H(+)(out) = L-phenylalanyl-L-leucine(in) + H(+)(in). It carries out the reaction L-phenylalanyl-L-phenylalanine(out) + H(+)(out) = L-phenylalanyl-L-phenylalanine(in) + H(+)(in). It catalyses the reaction L-lysyl-glycine(out) + H(+)(out) = L-lysyl-glycine(in) + H(+)(in). The enzyme catalyses L-tyrosylglycine(out) + H(+)(out) = L-tyrosylglycine(in) + H(+)(in). The catalysed reaction is L-alanyl-L-aspartate(out) + 2 H(+)(out) = L-alanyl-L-aspartate(in) + 2 H(+)(in). It carries out the reaction L-aspartyl-glycine(out) + 2 H(+)(out) = L-aspartyl-glycine(in) + 2 H(+)(in). It catalyses the reaction glycyl-L-aspartate(out) + 2 H(+)(out) = glycyl-L-aspartate(in) + 2 H(+)(in). The enzyme catalyses glycyl-L-glutamate(out) + 2 H(+)(out) = glycyl-L-glutamate(in) + 2 H(+)(in). The catalysed reaction is L-alanyl-L-leucyl-L-alanine(out) + H(+)(out) = L-alanyl-L-leucyl-L-alanine(in) + H(+)(in). It carries out the reaction L-alanyl-L-prolylglycine(out) + H(+)(out) = L-alanyl-L-prolylglycine(in) + H(+)(in). It catalyses the reaction glycylglycyl-L-isoleucine(out) + H(+)(out) = glycylglycyl-L-isoleucine(in) + H(+)(in). The enzyme catalyses glycylglycyl-L-proline(out) + H(+)(out) = glycylglycyl-L-proline(in) + H(+)(in). The catalysed reaction is L-methionyl-L-phenylalanyl-L-methionine(out) + H(+)(out) = L-methionyl-L-phenylalanyl-L-methionine(in) + H(+)(in). It carries out the reaction N-acetyl-D-muramoyl-L-alanyl-D-isoglutamine(out) + 2 H(+)(out) = N-acetyl-D-muramoyl-L-alanyl-D-isoglutamine(in) + 2 H(+)(in). It catalyses the reaction N(alpha)-formyl-L-methionyl-L-leucyl-L-phenylalanine(out) + 2 H(+)(out) = N(alpha)-formyl-L-methionyl-L-leucyl-L-phenylalanine(in) + 2 H(+)(in). Electrogenic proton-coupled amino-acid transporter that transports oligopeptides of 2 to 4 amino acids with a preference for dipeptides. Transports neutral and monovalently charged peptides with a proton to peptide stoichiometry of 1:1 or 2:1. Primarily responsible for the absorption of dietary di- and tripeptides from the small intestinal lumen. Mediates transepithelial transport of muramyl and N-formylated bacterial dipeptides contributing to recognition of pathogenic bacteria by the mucosal immune system. The chain is Solute carrier family 15 member 1 (SLC15A1) from Oryctolagus cuniculus (Rabbit).